Consider the following 1179-residue polypeptide: ATP-dependent helicase/deoxyribonuclease subunit B (1179 aa).

It belongs to the helicase family. AddB/RexB type 2 subfamily. In terms of assembly, heterodimer of AddA and RexB. It depends on Mg(2+) as a cofactor.

The heterodimer acts as both an ATP-dependent DNA helicase and an ATP-dependent, dual-direction single-stranded exonuclease. Recognizes the chi site generating a DNA molecule suitable for the initiation of homologous recombination. This subunit has 5' -&gt; 3' nuclease activity but not helicase activity. This chain is ATP-dependent helicase/deoxyribonuclease subunit B, found in Lacticaseibacillus casei (strain BL23) (Lactobacillus casei).